Consider the following 183-residue polypeptide: Adenine phosphoribosyltransferase (183 aa).

This sequence belongs to the purine/pyrimidine phosphoribosyltransferase family. In terms of assembly, homodimer.

The protein localises to the cytoplasm. It catalyses the reaction AMP + diphosphate = 5-phospho-alpha-D-ribose 1-diphosphate + adenine. It participates in purine metabolism; AMP biosynthesis via salvage pathway; AMP from adenine: step 1/1. In terms of biological role, catalyzes a salvage reaction resulting in the formation of AMP, that is energically less costly than de novo synthesis. The sequence is that of Adenine phosphoribosyltransferase from Shigella flexneri serotype 5b (strain 8401).